The primary structure comprises 738 residues: Ethylene receptor 1 (738 aa).

A run of 3 helical transmembrane segments spans residues 23–43 (ISDF…IYFV), 53–73 (WVLV…LINL), and 92–112 (VLTA…IPDL). Positions 65 and 69 each coordinate Cu cation. The GAF domain maps to 158–307 (DRHTILKTTL…VVADQVAVAL (150 aa)). The 236-residue stretch at 350–585 (VMNHEMRTPM…IFDVKLGISE (236 aa)) folds into the Histidine kinase domain. Position 353 is a phosphohistidine; by autocatalysis (His-353). ADP-binding positions include 470–473 (NAVK), Asp-513, Lys-529, Ser-544, and Leu-548. A Response regulatory domain is found at 611–729 (KVLVMDENGV…NIRDVLSDLL (119 aa)). The residue at position 659 (Asp-659) is a 4-aspartylphosphate. A Glycyl lysine isopeptide (Lys-Gly) (interchain with G-Cter in ubiquitin) cross-link involves residue Lys-714.

This sequence belongs to the ethylene receptor family. In terms of assembly, homodimer; disulfide-linked. Heteromer with ERS1, ERS2, ETR2 and EIN4. Interacts with AHP1, AHP2 and AHP3. Interacts with RTE1. Interacts with EIN2. The cofactor is Cu cation. Post-translationally, autophosphorylated. Phosphorylation at His-353 modulates the interaction with EIN2. As to expression, leaves, roots, stems, seedlings, flowers, anthers, carpels and ovules.

It localises to the endoplasmic reticulum membrane. It carries out the reaction ATP + protein L-histidine = ADP + protein N-phospho-L-histidine.. Its function is as follows. Ethylene receptor related to bacterial two-component regulators. Acts as a redundant negative regulator of ethylene signaling. In the presence of ethylene, the auto-kinase activity of ETR1 is inhibited and the non-phosphorylated kinase domain binds tightly to the corresponding domain of EIN2. The polypeptide is Ethylene receptor 1 (Arabidopsis thaliana (Mouse-ear cress)).